The chain runs to 483 residues: tRNA sulfurtransferase (483 aa).

The THUMP domain maps to 62 to 166 (PEICDALTRI…QDKLILVKAR (105 aa)). ATP contacts are provided by residues 184–185 (LI), Lys-266, Gly-288, and Gln-297. A disulfide bridge connects residues Cys-345 and Cys-457. One can recognise a Rhodanese domain in the interval 405-483 (LADTDVLLDI…GYTNVKVYRP (79 aa)). The active-site Cysteine persulfide intermediate is Cys-457.

It belongs to the ThiI family.

Its subcellular location is the cytoplasm. The enzyme catalyses [ThiI sulfur-carrier protein]-S-sulfanyl-L-cysteine + a uridine in tRNA + 2 reduced [2Fe-2S]-[ferredoxin] + ATP + H(+) = [ThiI sulfur-carrier protein]-L-cysteine + a 4-thiouridine in tRNA + 2 oxidized [2Fe-2S]-[ferredoxin] + AMP + diphosphate. The catalysed reaction is [ThiS sulfur-carrier protein]-C-terminal Gly-Gly-AMP + S-sulfanyl-L-cysteinyl-[cysteine desulfurase] + AH2 = [ThiS sulfur-carrier protein]-C-terminal-Gly-aminoethanethioate + L-cysteinyl-[cysteine desulfurase] + A + AMP + 2 H(+). Its pathway is cofactor biosynthesis; thiamine diphosphate biosynthesis. Catalyzes the ATP-dependent transfer of a sulfur to tRNA to produce 4-thiouridine in position 8 of tRNAs, which functions as a near-UV photosensor. Also catalyzes the transfer of sulfur to the sulfur carrier protein ThiS, forming ThiS-thiocarboxylate. This is a step in the synthesis of thiazole, in the thiamine biosynthesis pathway. The sulfur is donated as persulfide by IscS. This Yersinia pseudotuberculosis serotype IB (strain PB1/+) protein is tRNA sulfurtransferase.